An 886-amino-acid chain; its full sequence is Extended synaptotagmin-3 (886 aa).

Residues 1–21 are disordered; that stretch reads MRAEEPCAPGAPSALGAQRTP. Residues 1-29 are Cytoplasmic-facing; the sequence is MRAEEPCAPGAPSALGAQRTPGPELRLSS. 2 helical membrane passes run 30–50 and 51–71; these read QLLP…GPVY and LAGY…LWMW. The Cytoplasmic segment spans residues 72-886; that stretch reads WRRNRRGKLG…ELTPNGQPRS (815 aa). Residues 114–291 form the SMP-LTD domain; that stretch reads DVERVEWANK…LPNRVTVPVK (178 aa). C2 domains follow at residues 291-408 and 426-566; these read KKGL…DEWF and SLLT…QLDH. Ca(2+)-binding residues include Lys-321, Asp-322, Asp-332, Asp-379, Glu-380, Asp-381, Asp-383, Asp-385, and Asp-386. The disordered stretch occupies residues 613–673; the sequence is QGPKAQPQEE…PEPKGKDSAK (61 aa). The segment covering 642–659 has biased composition (low complexity); the sequence is RSTTTTTSATTVATEPTS. A compositionally biased stretch (basic and acidic residues) spans 664–673; it reads PEPKGKDSAK. A C2 3 domain is found at 754–876; sequence QLGEIQLTVR…DLIKGFSQWY (123 aa). Residues 801-808 are required for phosphatidylinositol 4,5-bisphosphate-dependent location at the cell membrane; sequence RKWACRKK.

The protein belongs to the extended synaptotagmin family. Interacts with ESYT1 and ESYT2. In terms of tissue distribution, widely expressed with high level in cerebellum and skin.

It is found in the cell membrane. The protein localises to the endoplasmic reticulum membrane. Its function is as follows. Binds glycerophospholipids in a barrel-like domain and may play a role in cellular lipid transport. Tethers the endoplasmic reticulum to the cell membrane and promotes the formation of appositions between the endoplasmic reticulum and the cell membrane. The protein is Extended synaptotagmin-3 of Homo sapiens (Human).